Consider the following 89-residue polypeptide: Putative regulatory protein Nther_1328 (89 aa).

This sequence belongs to the RemA family.

This Natranaerobius thermophilus (strain ATCC BAA-1301 / DSM 18059 / JW/NM-WN-LF) protein is Putative regulatory protein Nther_1328.